The primary structure comprises 572 residues: Proline--tRNA ligase (572 aa).

It belongs to the class-II aminoacyl-tRNA synthetase family. ProS type 1 subfamily. As to quaternary structure, homodimer.

Its subcellular location is the cytoplasm. It catalyses the reaction tRNA(Pro) + L-proline + ATP = L-prolyl-tRNA(Pro) + AMP + diphosphate. Its function is as follows. Catalyzes the attachment of proline to tRNA(Pro) in a two-step reaction: proline is first activated by ATP to form Pro-AMP and then transferred to the acceptor end of tRNA(Pro). As ProRS can inadvertently accommodate and process non-cognate amino acids such as alanine and cysteine, to avoid such errors it has two additional distinct editing activities against alanine. One activity is designated as 'pretransfer' editing and involves the tRNA(Pro)-independent hydrolysis of activated Ala-AMP. The other activity is designated 'posttransfer' editing and involves deacylation of mischarged Ala-tRNA(Pro). The misacylated Cys-tRNA(Pro) is not edited by ProRS. In Salmonella schwarzengrund (strain CVM19633), this protein is Proline--tRNA ligase.